The following is a 67-amino-acid chain: Small ribosomal subunit protein eS31 (67 aa).

Positions 31, 34, 49, and 52 each coordinate Zn(2+). The C4-type zinc-finger motif lies at 31–52 (CPKCGAGVFMAEHLNRFACGKC).

Belongs to the eukaryotic ribosomal protein eS31 family. As to quaternary structure, part of the 30S ribosomal subunit. Zn(2+) is required as a cofactor.

This is Small ribosomal subunit protein eS31 from Methanococcus maripaludis (strain C7 / ATCC BAA-1331).